The primary structure comprises 410 residues: Phosphoglycerate kinase (410 aa).

Residues 19–21, Arg-34, 57–60, Arg-114, and Arg-154 contribute to the substrate site; these read DLN and HQGK. Residues Glu-332 and 358–361 contribute to the ATP site; that span reads GGHS.

It belongs to the phosphoglycerate kinase family. In terms of assembly, homodimer.

It is found in the cytoplasm. The catalysed reaction is (2R)-3-phosphoglycerate + ATP = (2R)-3-phospho-glyceroyl phosphate + ADP. The protein operates within carbohydrate degradation; glycolysis; pyruvate from D-glyceraldehyde 3-phosphate: step 2/5. This Pyrococcus furiosus (strain ATCC 43587 / DSM 3638 / JCM 8422 / Vc1) protein is Phosphoglycerate kinase (pgk).